The primary structure comprises 283 residues: Bifunctional protein FolD (283 aa).

NADP(+) contacts are provided by residues 165–167 (GAS) and Ser190.

It belongs to the tetrahydrofolate dehydrogenase/cyclohydrolase family. Homodimer.

It catalyses the reaction (6R)-5,10-methylene-5,6,7,8-tetrahydrofolate + NADP(+) = (6R)-5,10-methenyltetrahydrofolate + NADPH. The catalysed reaction is (6R)-5,10-methenyltetrahydrofolate + H2O = (6R)-10-formyltetrahydrofolate + H(+). It participates in one-carbon metabolism; tetrahydrofolate interconversion. Its function is as follows. Catalyzes the oxidation of 5,10-methylenetetrahydrofolate to 5,10-methenyltetrahydrofolate and then the hydrolysis of 5,10-methenyltetrahydrofolate to 10-formyltetrahydrofolate. The sequence is that of Bifunctional protein FolD from Cupriavidus necator (strain ATCC 17699 / DSM 428 / KCTC 22496 / NCIMB 10442 / H16 / Stanier 337) (Ralstonia eutropha).